Reading from the N-terminus, the 769-residue chain is Serine protease HtrA-like (769 aa).

Over residues 1–20 (MDIGKKHVIPKSQYRRKRRE) the composition is skewed to basic residues. The interval 1-390 (MDIGKKHVIP…ATSKLNKGRA (390 aa)) is disordered. 2 stretches are compositionally biased toward basic and acidic residues: residues 21–64 (FFHN…ERFK) and 71–108 (LEQR…DVSK). Residues 126–137 (YEQNSEATLSTK) are compositionally biased toward polar residues. Basic and acidic residues predominate over residues 138–186 (STDKVESSDMRKLSPDKNKVGHEEQHVLSKPSEHDKETRIDFESSRTDS). Composition is skewed to polar residues over residues 202-221 (GNES…NTVP) and 247-262 (QQSQ…YGDS). A compositionally biased stretch (basic and acidic residues) spans 264 to 295 (QNDKSNHENDLSHHTPSKSDDKDNVMREDHIV). Over residues 298 to 308 (NPDNDINTPSL) the composition is skewed to polar residues. Residues 310-330 (KIDDDRKLDEKIHVEDKHKQN) show a composition bias toward basic and acidic residues. A compositionally biased stretch (polar residues) spans 331–347 (ADSSETVGYQSQSSVSH). Positions 348–362 (RSTEKRNMAINDHHK) are enriched in basic and acidic residues. Positions 366 to 390 (QKLNTKTSANNNQKKATSKLNKGRA) are enriched in polar residues. A helical membrane pass occupies residues 410 to 430 (LVILMGIIILIVILNAIFNNV). Active-site charge relay system residues include histidine 504, aspartate 534, and serine 619. The PDZ domain occupies 680-733 (IASLNSFERQAVKLPGKVKNGVVVDQVDNNGLADQSSLKKGDVITELDGKLLED).

It belongs to the peptidase S1C family.

Its subcellular location is the cell membrane. The sequence is that of Serine protease HtrA-like from Staphylococcus aureus (strain bovine RF122 / ET3-1).